Reading from the N-terminus, the 315-residue chain is 4-hydroxy-3-methylbut-2-enyl diphosphate reductase (315 aa).

Residue C12 participates in [4Fe-4S] cluster binding. H43 and H81 together coordinate (2E)-4-hydroxy-3-methylbut-2-enyl diphosphate. The dimethylallyl diphosphate site is built by H43 and H81. 2 residues coordinate isopentenyl diphosphate: H43 and H81. C103 is a binding site for [4Fe-4S] cluster. H131 lines the (2E)-4-hydroxy-3-methylbut-2-enyl diphosphate pocket. H131 contacts dimethylallyl diphosphate. Isopentenyl diphosphate is bound at residue H131. E133 (proton donor) is an active-site residue. Residue T170 participates in (2E)-4-hydroxy-3-methylbut-2-enyl diphosphate binding. C198 is a [4Fe-4S] cluster binding site. Residues S226, N228, and S271 each coordinate (2E)-4-hydroxy-3-methylbut-2-enyl diphosphate. Dimethylallyl diphosphate contacts are provided by S226, N228, and S271. Residues S226, N228, and S271 each contribute to the isopentenyl diphosphate site.

This sequence belongs to the IspH family. It depends on [4Fe-4S] cluster as a cofactor.

It catalyses the reaction isopentenyl diphosphate + 2 oxidized [2Fe-2S]-[ferredoxin] + H2O = (2E)-4-hydroxy-3-methylbut-2-enyl diphosphate + 2 reduced [2Fe-2S]-[ferredoxin] + 2 H(+). The enzyme catalyses dimethylallyl diphosphate + 2 oxidized [2Fe-2S]-[ferredoxin] + H2O = (2E)-4-hydroxy-3-methylbut-2-enyl diphosphate + 2 reduced [2Fe-2S]-[ferredoxin] + 2 H(+). The protein operates within isoprenoid biosynthesis; dimethylallyl diphosphate biosynthesis; dimethylallyl diphosphate from (2E)-4-hydroxy-3-methylbutenyl diphosphate: step 1/1. It functions in the pathway isoprenoid biosynthesis; isopentenyl diphosphate biosynthesis via DXP pathway; isopentenyl diphosphate from 1-deoxy-D-xylulose 5-phosphate: step 6/6. In terms of biological role, catalyzes the conversion of 1-hydroxy-2-methyl-2-(E)-butenyl 4-diphosphate (HMBPP) into a mixture of isopentenyl diphosphate (IPP) and dimethylallyl diphosphate (DMAPP). Acts in the terminal step of the DOXP/MEP pathway for isoprenoid precursor biosynthesis. The protein is 4-hydroxy-3-methylbut-2-enyl diphosphate reductase of Bacillus cytotoxicus (strain DSM 22905 / CIP 110041 / 391-98 / NVH 391-98).